We begin with the raw amino-acid sequence, 338 residues long: Ketol-acid reductoisomerase (NADP(+)) (338 aa).

In terms of domain architecture, KARI N-terminal Rossmann spans 1–181 (MKVFYDKDCD…GGGKAGIIET (181 aa)). NADP(+)-binding positions include 24-27 (YGSQ), R47, and S52. Residue H107 is part of the active site. An NADP(+)-binding site is contributed by G133. A KARI C-terminal knotted domain is found at 182 to 327 (NFKEETETDL…AQLRAMMPWI (146 aa)). Positions 190, 194, 226, and 230 each coordinate Mg(2+). S251 contacts substrate.

Belongs to the ketol-acid reductoisomerase family. The cofactor is Mg(2+).

The enzyme catalyses (2R)-2,3-dihydroxy-3-methylbutanoate + NADP(+) = (2S)-2-acetolactate + NADPH + H(+). The catalysed reaction is (2R,3R)-2,3-dihydroxy-3-methylpentanoate + NADP(+) = (S)-2-ethyl-2-hydroxy-3-oxobutanoate + NADPH + H(+). Its pathway is amino-acid biosynthesis; L-isoleucine biosynthesis; L-isoleucine from 2-oxobutanoate: step 2/4. It functions in the pathway amino-acid biosynthesis; L-valine biosynthesis; L-valine from pyruvate: step 2/4. In terms of biological role, involved in the biosynthesis of branched-chain amino acids (BCAA). Catalyzes an alkyl-migration followed by a ketol-acid reduction of (S)-2-acetolactate (S2AL) to yield (R)-2,3-dihydroxy-isovalerate. In the isomerase reaction, S2AL is rearranged via a Mg-dependent methyl migration to produce 3-hydroxy-3-methyl-2-ketobutyrate (HMKB). In the reductase reaction, this 2-ketoacid undergoes a metal-dependent reduction by NADPH to yield (R)-2,3-dihydroxy-isovalerate. The sequence is that of Ketol-acid reductoisomerase (NADP(+)) from Paracidovorax citrulli (strain AAC00-1) (Acidovorax citrulli).